The following is a 713-amino-acid chain: Glycine--tRNA ligase beta subunit (713 aa).

Belongs to the class-II aminoacyl-tRNA synthetase family. In terms of assembly, tetramer of two alpha and two beta subunits.

The protein resides in the cytoplasm. The catalysed reaction is tRNA(Gly) + glycine + ATP = glycyl-tRNA(Gly) + AMP + diphosphate. The chain is Glycine--tRNA ligase beta subunit from Leptothrix cholodnii (strain ATCC 51168 / LMG 8142 / SP-6) (Leptothrix discophora (strain SP-6)).